Reading from the N-terminus, the 203-residue chain is Putative archaetidylserine decarboxylase proenzyme (203 aa).

Residue Ser171 is the Schiff-base intermediate with substrate; via pyruvic acid of the active site. Ser171 is modified (pyruvic acid (Ser); by autocatalysis).

The protein belongs to the phosphatidylserine decarboxylase family. PSD-A subfamily. As to quaternary structure, heterodimer of a large membrane-associated beta subunit and a small pyruvoyl-containing alpha subunit. It depends on pyruvate as a cofactor. Post-translationally, is synthesized initially as an inactive proenzyme. Formation of the active enzyme involves a self-maturation process in which the active site pyruvoyl group is generated from an internal serine residue via an autocatalytic post-translational modification. Two non-identical subunits are generated from the proenzyme in this reaction, and the pyruvate is formed at the N-terminus of the alpha chain, which is derived from the carboxyl end of the proenzyme. The post-translation cleavage follows an unusual pathway, termed non-hydrolytic serinolysis, in which the side chain hydroxyl group of the serine supplies its oxygen atom to form the C-terminus of the beta chain, while the remainder of the serine residue undergoes an oxidative deamination to produce ammonia and the pyruvoyl prosthetic group on the alpha chain.

Its subcellular location is the cell membrane. It catalyses the reaction archaetidylserine + H(+) = archaetidylethanolamine + CO2. Functionally, catalyzes the formation of archaetidylethanolamine (PtdEtn) from archaetidylserine (PtdSer). The protein is Putative archaetidylserine decarboxylase proenzyme of Methanosarcina barkeri (strain Fusaro / DSM 804).